Reading from the N-terminus, the 167-residue chain is Endothelin-3 (167 aa).

Positions 1–19 are cleaved as a signal peptide; sequence MELGLWLLLGLTVTSAAAA. A propeptide spanning residues 20-50 is cleaved from the precursor; that stretch reads LPAQPGNAGQERGPGRSGDQEEKRVPAHHRP. Residues 22–45 form a disordered region; that stretch reads AQPGNAGQERGPGRSGDQEEKRVP. 2 disulfides stabilise this stretch: cysteine 53-cysteine 67 and cysteine 55-cysteine 63. The propeptide occupies 74 to 167; the sequence is INTPEQTVPY…KSRTDKVHQP (94 aa). The interval 85 to 112 is disordered; the sequence is LSNHRGSLRGKRSSGPVPESSQSSPQTR. Positions 97 to 109 are enriched in low complexity; it reads SSGPVPESSQSSP. The segment at 115 to 135 is endothelin-like; the sequence is CACSGVDDKACAYFCAHVTSY. A compositionally biased stretch (basic and acidic residues) spans 140–149; it reads EKAAAEEKQE. Residues 140 to 167 are disordered; that stretch reads EKAAAEEKQETGGPRQRLKSRTDKVHQP.

It belongs to the endothelin/sarafotoxin family.

Its subcellular location is the secreted. In terms of biological role, endothelins are endothelium-derived vasoconstrictor peptides. This Rattus norvegicus (Rat) protein is Endothelin-3 (Edn3).